The sequence spans 307 residues: Haloalkane dehalogenase (307 aa).

An AB hydrolase-1 domain is found at 34 to 158; it reads PVLFLHGNPT…FQAFRTADVG (125 aa). Asp-106 serves as the catalytic Nucleophile. Catalysis depends on Glu-130, which acts as the Proton donor. The active-site Proton acceptor is the His-272.

Belongs to the haloalkane dehalogenase family. Type 2 subfamily. Monomer.

It carries out the reaction 1-haloalkane + H2O = a halide anion + a primary alcohol + H(+). It participates in xenobiotic degradation; 1,2-dibromoethane degradation. Catalyzes hydrolytic cleavage of carbon-halogen bonds in halogenated aliphatic compounds, leading to the formation of the corresponding primary alcohols, halide ions and protons. Has a broad substrate specificity, which includes mono- and di-chlorinated and brominated alkanes. The highest activity was found with 1,2-dibromoethane, whereas low activity was measured with the analog 1,2-dichloroethane. This Mycobacterium sp. (strain GP1) protein is Haloalkane dehalogenase (dhaAF).